We begin with the raw amino-acid sequence, 316 residues long: Daunorubicin resistance ATP-binding protein DrrA3 (316 aa).

Residues 6–236 (ITVDGAEKRY…TGGDRIDVVL (231 aa)) form the ABC transporter domain. ATP is bound at residue 38–45 (GPNGAGKT).

This sequence belongs to the ABC transporter superfamily. Drug exporter-1 (DrugE1) (TC 3.A.1.105) family. The complex is probably composed of two ATP-binding proteins (DrrA3) and two transmembrane proteins (DrrB3).

The protein localises to the cell membrane. It carries out the reaction daunorubicin(in) + ATP + H2O = daunorubicin(out) + ADP + phosphate + H(+). Part of the ABC transporter complex DrrA3B3 involved in daunorubicin efflux. Responsible for energy coupling to the transport system. Confers self-resistance to daunorubicin, an antibiotic produced by S.coeruleorubidus. The efficiency of DrrA3B3 to export daunorubicin is probably lower than that of DrrA1B1 or DrrA2B2. The chain is Daunorubicin resistance ATP-binding protein DrrA3 from Streptomyces coeruleorubidus.